The primary structure comprises 233 residues: Small ribosomal subunit protein uS3 (233 aa).

One can recognise a KH type-2 domain in the interval 39-107 (VRQYLNKELA…PAQINIAEVR (69 aa)).

The protein belongs to the universal ribosomal protein uS3 family. In terms of assembly, part of the 30S ribosomal subunit. Forms a tight complex with proteins S10 and S14.

Functionally, binds the lower part of the 30S subunit head. Binds mRNA in the 70S ribosome, positioning it for translation. The sequence is that of Small ribosomal subunit protein uS3 from Cronobacter sakazakii (strain ATCC BAA-894) (Enterobacter sakazakii).